The following is a 147-amino-acid chain: MDWRFTVMWTILISALSESCNQTCSCQCPCSTTVNYSTSTETATSTYSTTVISNKSTSESINCSTATAPATTVSTKPSKTTTQISTTTNTNVETTTCTNTTTTVTCDGFNYTVHKRCDRSYEVINVTGYVGGNITLKNAIRLRNGTM.

This is an uncharacterized protein from Human cytomegalovirus (strain AD169) (HHV-5).